Here is a 339-residue protein sequence, read N- to C-terminus: Phenylalanine--tRNA ligase alpha subunit (339 aa).

Glu-254 is a binding site for Mg(2+).

It belongs to the class-II aminoacyl-tRNA synthetase family. Phe-tRNA synthetase alpha subunit type 1 subfamily. Tetramer of two alpha and two beta subunits. Mg(2+) serves as cofactor.

It localises to the cytoplasm. It carries out the reaction tRNA(Phe) + L-phenylalanine + ATP = L-phenylalanyl-tRNA(Phe) + AMP + diphosphate + H(+). The chain is Phenylalanine--tRNA ligase alpha subunit from Clostridium novyi (strain NT).